We begin with the raw amino-acid sequence, 286 residues long: MSIISTKYLLQDAQANGYAVPAFNIHNAETIQAILEVCSEMRSPVILAGTPGTFKHIALEEIYALCSAYSTTYNMPLALHLDHHESLDDIRRKVHAGVRSAMIDGSHFPFDENVKLVKSVVDFCHSQDCSVEAELGRLGGVEDDMSVDAESAFLTDPQEAKRFVELTGVDSLAVAIGTAHGLYSKTPKIDFQRLAEIREVVDVPLVLHGASDVPDEFVRRTIELGVTKVNVATELKIAFAGAVKAWFAENPQGNDPRYYMRVGMDAMKEVVRNKINVCGSANRISA.

The active-site Proton donor is the aspartate 82. Histidine 83 and histidine 180 together coordinate Zn(2+). Residue glycine 181 participates in dihydroxyacetone phosphate binding. Position 208 (histidine 208) interacts with Zn(2+). Residues 209 to 211 and 230 to 233 each bind dihydroxyacetone phosphate; these read GAS and NVAT.

It belongs to the class II fructose-bisphosphate aldolase family. TagBP aldolase KbaY subfamily. In terms of assembly, homotetramer. Forms a complex with KbaZ. Zn(2+) serves as cofactor.

The catalysed reaction is D-tagatofuranose 1,6-bisphosphate = D-glyceraldehyde 3-phosphate + dihydroxyacetone phosphate. It participates in carbohydrate metabolism; D-tagatose 6-phosphate degradation; D-glyceraldehyde 3-phosphate and glycerone phosphate from D-tagatose 6-phosphate: step 2/2. Functionally, catalytic subunit of the tagatose-1,6-bisphosphate aldolase KbaYZ, which catalyzes the reversible aldol condensation of dihydroxyacetone phosphate (DHAP or glycerone-phosphate) with glyceraldehyde 3-phosphate (G3P) to produce tagatose 1,6-bisphosphate (TBP). Requires KbaZ subunit for full activity and stability. The polypeptide is D-tagatose-1,6-bisphosphate aldolase subunit KbaY (Escherichia coli O17:K52:H18 (strain UMN026 / ExPEC)).